The following is a 644-amino-acid chain: Macrolide export ATP-binding/permease protein MacB (644 aa).

The ABC transporter domain maps to 4-242 (IECKNINRYF…SNVGRIQEKA (239 aa)). 40–47 (GQSGSGKS) serves as a coordination point for ATP. The next 4 helical transmembrane spans lie at 270–290 (LLTM…VALG), 524–544 (IALI…LVSV), 574–594 (LICV…SLVF), and 607–627 (AMSV…FGFM).

It belongs to the ABC transporter superfamily. Macrolide exporter (TC 3.A.1.122) family. In terms of assembly, homodimer.

The protein resides in the cell inner membrane. Functionally, non-canonical ABC transporter that contains transmembrane domains (TMD), which form a pore in the inner membrane, and an ATP-binding domain (NBD), which is responsible for energy generation. Confers resistance against macrolides. The sequence is that of Macrolide export ATP-binding/permease protein MacB from Neisseria meningitidis serogroup A / serotype 4A (strain DSM 15465 / Z2491).